Reading from the N-terminus, the 485-residue chain is Acyl transferase 1 (485 aa).

The Proton acceptor role is filled by His172.

Belongs to the plant acyltransferase family. In terms of tissue distribution, highly expressed in young panicles. Expressed in leaf sheaths and panicles.

Involved in defense against pathogens. May contribute to disease resistance by potentiating disease resistance signaling, or producing phytoalexin-like secondary products. The polypeptide is Acyl transferase 1 (Oryza sativa subsp. japonica (Rice)).